We begin with the raw amino-acid sequence, 88 residues long: MGIARILSAVLFLSVLFVVTFPALLSADHHDGRIDTCRLPSDRGRCKASFERWYFNGRTCAKFIYGGCGGNGNKFPTQEACMKRCAKA.

A signal peptide spans Met-1 to Ala-27. The propeptide occupies Asp-28–Arg-33. The region spanning Cys-37 to Cys-85 is the BPTI/Kunitz inhibitor domain. Cystine bridges form between Cys-37/Cys-85, Cys-46/Cys-68, and Cys-60/Cys-81.

It belongs to the venom Kunitz-type family. 02 (native) subfamily. In terms of tissue distribution, expressed by the venom gland.

The protein resides in the secreted. Its function is as follows. Serine protease inhibitor that inhibits trypsin (Ki=5.54 uM) at a molar ratio of 1:1. This is Kunitz-type kappaPI-theraphotoxin-Hs1a from Cyriopagopus schmidti (Chinese bird spider).